A 434-amino-acid chain; its full sequence is Sulfide-quinone reductase (434 aa).

FAD-binding positions include 8-12 (GAGTG), 34-35 (SA), and 77-78 (SA). Cys160 functions as the Cysteine persulfide intermediate in the catalytic mechanism. Residues Ile302 and Gly322 each contribute to the FAD site. Catalysis depends on Cys356, which acts as the Cysteine persulfide intermediate. Lys391 lines the FAD pocket.

Belongs to the SQRD family. As to quaternary structure, homodimer. FAD serves as cofactor.

Its subcellular location is the membrane. It carries out the reaction n a quinone + n hydrogen sulfide + n H(+) = polysulfur(n-2) + n a quinol. Functionally, catalyzes the oxidation of hydrogen sulfide, with the help of a quinone. Consecutive reaction cycles lead to the accumulation of a polysulfide product on the active site Cys residues; these products are released when they exceed a critical length, typically as cyclooctasulfur. The protein is Sulfide-quinone reductase of Acidithiobacillus ferrooxidans (strain ATCC 23270 / DSM 14882 / CIP 104768 / NCIMB 8455) (Ferrobacillus ferrooxidans (strain ATCC 23270)).